Consider the following 422-residue polypeptide: MAAAAVVEFQRAQSLLSTDREASIDILHSIVKRDIQENDEEAVQVKEQSILELGSLLAKTGQAAELGGLLKYVRPFLNSISKAKAARLVRSLLDLFLDMEAATGQEVELCLECIEWAKSEKRTFLRQALEARLVSLYFDTKRYQEALHLGSQLLRELKKMDDKALLVEVQLLESKTYHALSNLPKARAALTSARTTANAIYCPPKLQATLDMQSGIIHAAEEKDWKTAYSYFYEAFEGYDSIDSPKAITSLKYMLLCKIMLNTPEDVQALVSGKLALRYAGRQTEALKCVAQASKNRSLADFEKALTDYRAELRDDPIISTHLAKLYDNLLEQNLIRVIEPFSRVQIEHISSLIKLSKADVERKLSQMILDKKFHGILDQGEGVLIIFDEPPVDKTYEAALETIQNMSKVVDSLYNKAKKLT.

Alanine 2 is modified (N-acetylalanine). Phosphoserine is present on residues serine 14 and serine 23. A PCI domain is found at 224 to 392 (DWKTAYSYFY…GVLIIFDEPP (169 aa)). Lysine 274 participates in a covalent cross-link: Glycyl lysine isopeptide (Lys-Gly) (interchain with G-Cter in SUMO2).

Belongs to the proteasome subunit S9 family. In terms of assembly, component of the 19S proteasome regulatory particle complex. The 26S proteasome consists of a 20S core particle (CP) and two 19S regulatory subunits (RP). The regulatory particle is made of a lid composed of 9 subunits including PSMD11, a base containing 6 ATPases and few additional components. In terms of processing, phosphorylated by AMPK.

Its subcellular location is the nucleus. The protein localises to the cytoplasm. It is found in the cytosol. Its function is as follows. Component of the 26S proteasome, a multiprotein complex involved in the ATP-dependent degradation of ubiquitinated proteins. This complex plays a key role in the maintenance of protein homeostasis by removing misfolded or damaged proteins, which could impair cellular functions, and by removing proteins whose functions are no longer required. Therefore, the proteasome participates in numerous cellular processes, including cell cycle progression, apoptosis, or DNA damage repair. In the complex, PSMD11 is required for proteasome assembly. Plays a key role in increased proteasome activity in embryonic stem cells (ESCs): its high expression in ESCs promotes enhanced assembly of the 26S proteasome, followed by higher proteasome activity. The sequence is that of 26S proteasome non-ATPase regulatory subunit 11 (PSMD11) from Bos taurus (Bovine).